The primary structure comprises 246 residues: tRNA (guanine-N(1)-)-methyltransferase (246 aa).

S-adenosyl-L-methionine-binding positions include Gly-113 and 133-138 (IGDFVM).

The protein belongs to the RNA methyltransferase TrmD family. As to quaternary structure, homodimer.

The protein resides in the cytoplasm. The enzyme catalyses guanosine(37) in tRNA + S-adenosyl-L-methionine = N(1)-methylguanosine(37) in tRNA + S-adenosyl-L-homocysteine + H(+). Specifically methylates guanosine-37 in various tRNAs. This is tRNA (guanine-N(1)-)-methyltransferase from Vibrio atlanticus (strain LGP32) (Vibrio splendidus (strain Mel32)).